A 214-amino-acid polypeptide reads, in one-letter code: Putative 3-methyladenine DNA glycosylase (214 aa).

The protein belongs to the DNA glycosylase MPG family.

The polypeptide is Putative 3-methyladenine DNA glycosylase (Gloeobacter violaceus (strain ATCC 29082 / PCC 7421)).